The chain runs to 361 residues: DNA replication and repair protein RecF (361 aa).

30–37 contributes to the ATP binding site; that stretch reads GDNAQGKT.

This sequence belongs to the RecF family.

It localises to the cytoplasm. Functionally, the RecF protein is involved in DNA metabolism; it is required for DNA replication and normal SOS inducibility. RecF binds preferentially to single-stranded, linear DNA. It also seems to bind ATP. This chain is DNA replication and repair protein RecF, found in Clostridium novyi (strain NT).